The chain runs to 582 residues: DNA repair and recombination protein radC (582 aa).

A DNA-binding region spans residues 146–150; it reads KRALR. Positions 194–204 are enriched in basic and acidic residues; that stretch reads KKEPMRVKPSL. Disordered stretches follow at residues 194–226, 310–400, and 485–582; these read KKEP…NSAA, QIPN…INGQ, and APSG…QHQH. Positions 326–335 are enriched in polar residues; the sequence is QNQYTNQRQS. The segment covering 516 to 529 has biased composition (low complexity); sequence AAAQNNTAAANRMA.

Belongs to the RAD52 family. In terms of assembly, part of a complex that includes RAD51, RAD52 and RAD59.

The protein localises to the nucleus. Involved in DNA double-strand break (DSB) repair and recombination. Promotes the annealing of complementary single-stranded DNA and by stimulation of the RAD51 recombinase. The sequence is that of DNA repair and recombination protein radC (radC) from Emericella nidulans (strain FGSC A4 / ATCC 38163 / CBS 112.46 / NRRL 194 / M139) (Aspergillus nidulans).